Here is a 328-residue protein sequence, read N- to C-terminus: Protoheme IX farnesyltransferase (328 aa).

The next 8 helical transmembrane spans lie at 31–51 (IILL…KGEV), 53–73 (LFLL…ANAI), 120–140 (VFAN…YVGV), 153–173 (IVIG…AVTG), 181–201 (LLFA…AIYI), 226–246 (IWVY…PLHV), 250–270 (IYAV…WQLL), and 285–305 (YSIY…LPFT).

This sequence belongs to the UbiA prenyltransferase family. Protoheme IX farnesyltransferase subfamily.

The protein resides in the cell inner membrane. It catalyses the reaction heme b + (2E,6E)-farnesyl diphosphate + H2O = Fe(II)-heme o + diphosphate. It participates in porphyrin-containing compound metabolism; heme O biosynthesis; heme O from protoheme: step 1/1. Functionally, converts heme B (protoheme IX) to heme O by substitution of the vinyl group on carbon 2 of heme B porphyrin ring with a hydroxyethyl farnesyl side group. This Trichodesmium erythraeum (strain IMS101) protein is Protoheme IX farnesyltransferase.